The primary structure comprises 62 residues: Small, acid-soluble spore protein A (62 aa).

The protein belongs to the alpha/beta-type SASP family.

In terms of biological role, SASP are bound to spore DNA. They are double-stranded DNA-binding proteins that cause DNA to change to an a-like conformation. They protect the DNA backbone from chemical and enzymatic cleavage and are thus involved in dormant spore's high resistance to UV light. This chain is Small, acid-soluble spore protein A (sasP-A), found in Priestia megaterium (Bacillus megaterium).